Reading from the N-terminus, the 160-residue chain is Secreted RxLR effector protein 83 (160 aa).

The N-terminal stretch at 1-21 is a signal peptide; it reads MLVLLAATFFIYISRLTSTDA. The RxLR motif lies at 27–30; the sequence is RGLR. N-linked (GlcNAc...) asparagine glycosylation is found at Asn39 and Asn131.

This sequence belongs to the RxLR effector family.

It localises to the secreted. The protein localises to the host nucleus. It is found in the host cytoplasm. Its function is as follows. Secreted effector that completely suppresses the host cell death induced by cell death-inducing proteins. This is Secreted RxLR effector protein 83 from Plasmopara viticola (Downy mildew of grapevine).